The primary structure comprises 338 residues: Glyceraldehyde-3-phosphate dehydrogenase, cytosolic (338 aa).

Positions Ala-2–Asn-153 are binding to NAD. Residues Arg-15–Ile-16 and Asp-37 each bind NAD(+). Residues Gly-56–Glu-75 form an external loop region. Arg-84 provides a ligand contact to NAD(+). The interval Ala-154–Ala-338 is catalytic. Ser-155–Thr-157 contacts D-glyceraldehyde 3-phosphate. The Nucleophile role is filled by Cys-156. S-nitrosocysteine occurs at positions 156 and 160. The interval His-183 to Ala-206 is S-loop. Residues Thr-186, Thr-215 to Gly-216, and Arg-238 each bind D-glyceraldehyde 3-phosphate. Asn-320 serves as a coordination point for NAD(+).

The protein belongs to the glyceraldehyde-3-phosphate dehydrogenase family. Homotetramer.

Its subcellular location is the cytoplasm. The enzyme catalyses D-glyceraldehyde 3-phosphate + phosphate + NAD(+) = (2R)-3-phospho-glyceroyl phosphate + NADH + H(+). Its pathway is carbohydrate degradation; glycolysis; pyruvate from D-glyceraldehyde 3-phosphate: step 1/5. In terms of biological role, key enzyme in glycolysis that catalyzes the first step of the pathway by converting D-glyceraldehyde 3-phosphate (G3P) into 3-phospho-D-glyceroyl phosphate. Essential for the maintenance of cellular ATP levels and carbohydrate metabolism. The sequence is that of Glyceraldehyde-3-phosphate dehydrogenase, cytosolic (GAPC) from Sinapis alba (White mustard).